The sequence spans 199 residues: MKQSHFFAHLSRLKLINRWPLMRNVRTENVSEHSLQVAMVAHALAAIKNRKFGGNVNAERIALLAMYHDASEVLTGDLPTPVKYFNSQIAKEYKAIEKIAQQKLVDMVPEELQDIFAPLIDEHAYSDEEKSLVKQADALCAYLKCLEELAAGNNEFLLAKTRLEATLEARRSQEMDYFMEVFVPSFHLSLDEISQDSPL.

Residues 18 to 19 (RW) and histidine 33 contribute to the substrate site. Positions 30 to 142 (VSEHSLQVAM…VKQADALCAY (113 aa)) constitute an HD domain. Residues histidine 33, histidine 68, and aspartate 69 each coordinate a divalent metal cation. Residues aspartate 69, 77–80 (DLPT), and aspartate 137 each bind substrate. Position 137 (aspartate 137) interacts with a divalent metal cation.

This sequence belongs to the 5DNU family. In terms of assembly, homodimer. A divalent metal cation is required as a cofactor.

The protein localises to the cytoplasm. It catalyses the reaction a 2'-deoxyribonucleoside 5'-phosphate + H2O = a 2'-deoxyribonucleoside + phosphate. Its function is as follows. Catalyzes the strictly specific dephosphorylation of 2'-deoxyribonucleoside 5'-monophosphates. The protein is 5'-deoxynucleotidase YfbR of Escherichia coli O127:H6 (strain E2348/69 / EPEC).